The chain runs to 353 residues: Photosystem II protein D1 (353 aa).

An N-acetylthreonine modification is found at threonine 2. Residue threonine 2 is modified to Phosphothreonine. 3 helical membrane-spanning segments follow: residues 29-46 (YIGW…TATS), 118-133 (HFLL…EWEL), and 142-156 (WIAV…AATA). Chlorophyll a is bound at residue histidine 118. Tyrosine 126 is a binding site for pheophytin a. Residues aspartate 170 and glutamate 189 each coordinate [CaMn4O5] cluster. The chain crosses the membrane as a helical span at residues 197 to 218 (FHMLGVAGVFGGSLFSAMHGSL). A chlorophyll a-binding site is contributed by histidine 198. Residues histidine 215 and 264 to 265 (SF) each bind a quinone. Position 215 (histidine 215) interacts with Fe cation. Histidine 272 serves as a coordination point for Fe cation. A helical membrane pass occupies residues 274–288 (FLAAWPVIGIWFTSL). [CaMn4O5] cluster-binding residues include histidine 332, glutamate 333, aspartate 342, and alanine 344. The propeptide occupies 345–353 (AVEAPSTIG).

The protein belongs to the reaction center PufL/M/PsbA/D family. As to quaternary structure, PSII is composed of 1 copy each of membrane proteins PsbA, PsbB, PsbC, PsbD, PsbE, PsbF, PsbH, PsbI, PsbJ, PsbK, PsbL, PsbM, PsbT, PsbX, PsbY, PsbZ, Psb30/Ycf12, at least 3 peripheral proteins of the oxygen-evolving complex and a large number of cofactors. It forms dimeric complexes. Requires The D1/D2 heterodimer binds P680, chlorophylls that are the primary electron donor of PSII, and subsequent electron acceptors. It shares a non-heme iron and each subunit binds pheophytin, quinone, additional chlorophylls, carotenoids and lipids. D1 provides most of the ligands for the Mn4-Ca-O5 cluster of the oxygen-evolving complex (OEC). There is also a Cl(-1) ion associated with D1 and D2, which is required for oxygen evolution. The PSII complex binds additional chlorophylls, carotenoids and specific lipids. as cofactor. Post-translationally, tyr-161 forms a radical intermediate that is referred to as redox-active TyrZ, YZ or Y-Z. In terms of processing, C-terminally processed by CTPA; processing is essential to allow assembly of the oxygen-evolving complex and thus photosynthetic growth.

It is found in the plastid. It localises to the chloroplast thylakoid membrane. It carries out the reaction 2 a plastoquinone + 4 hnu + 2 H2O = 2 a plastoquinol + O2. Photosystem II (PSII) is a light-driven water:plastoquinone oxidoreductase that uses light energy to abstract electrons from H(2)O, generating O(2) and a proton gradient subsequently used for ATP formation. It consists of a core antenna complex that captures photons, and an electron transfer chain that converts photonic excitation into a charge separation. The D1/D2 (PsbA/PsbD) reaction center heterodimer binds P680, the primary electron donor of PSII as well as several subsequent electron acceptors. This Landoltia punctata (Dotted duckmeat) protein is Photosystem II protein D1.